The following is a 208-amino-acid chain: Large ribosomal subunit protein bL9 (208 aa).

Residues 161–208 (KKRKIEKEVEEGSGTSVDESLKLDSVSDSIDTSGVNSSDKEEENNIIE) form a disordered region. Over residues 186–197 (VSDSIDTSGVNS) the composition is skewed to polar residues.

The protein belongs to the bacterial ribosomal protein bL9 family.

In terms of biological role, binds to the 23S rRNA. This is Large ribosomal subunit protein bL9 from Ehrlichia canis (strain Jake).